Consider the following 534-residue polypeptide: Coiled-coil domain-containing protein 183 (534 aa).

Coiled-coil stretches lie at residues 10-54 (EAQI…NLRR), 136-209 (DATK…DMTV), and 321-406 (RFLA…LLVI).

The chain is Coiled-coil domain-containing protein 183 (Ccdc183) from Mus musculus (Mouse).